We begin with the raw amino-acid sequence, 348 residues long: tRNA N6-adenosine threonylcarbamoyltransferase (348 aa).

Residues His-116 and His-120 each contribute to the Fe cation site. Substrate-binding positions include Gln-138–Gly-142, Asp-171, Gly-184, Asp-188, and Asn-277. Residue Asp-309 participates in Fe cation binding.

The protein belongs to the KAE1 / TsaD family. Fe(2+) is required as a cofactor.

Its subcellular location is the cytoplasm. It carries out the reaction L-threonylcarbamoyladenylate + adenosine(37) in tRNA = N(6)-L-threonylcarbamoyladenosine(37) in tRNA + AMP + H(+). Functionally, required for the formation of a threonylcarbamoyl group on adenosine at position 37 (t(6)A37) in tRNAs that read codons beginning with adenine. Is involved in the transfer of the threonylcarbamoyl moiety of threonylcarbamoyl-AMP (TC-AMP) to the N6 group of A37, together with TsaE and TsaB. TsaD likely plays a direct catalytic role in this reaction. This Lactobacillus gasseri (strain ATCC 33323 / DSM 20243 / BCRC 14619 / CIP 102991 / JCM 1131 / KCTC 3163 / NCIMB 11718 / NCTC 13722 / AM63) protein is tRNA N6-adenosine threonylcarbamoyltransferase.